Consider the following 255-residue polypeptide: Uracil-DNA glycosylase (255 aa).

Positions 1-20 are disordered; it reads MFSASTTPEQPLGLSGDATP. The active-site Proton acceptor is aspartate 99.

This sequence belongs to the uracil-DNA glycosylase (UDG) superfamily. UNG family.

The protein resides in the host nucleus. It catalyses the reaction Hydrolyzes single-stranded DNA or mismatched double-stranded DNA and polynucleotides, releasing free uracil.. In terms of biological role, excises uracil residues from the DNA which can arise as a result of misincorporation of dUMP residues by DNA polymerase or deamination of cytosines. Therefore may reduce deleterious uracil incorporation into the viral genome, particularly in terminally differentiated cells which lack DNA repair enzymes. In Human herpesvirus 2 (strain HG52) (HHV-2), this protein is Uracil-DNA glycosylase.